The primary structure comprises 180 residues: Cytokinin-beta-glucosidase (180 aa).

Accumulates in young leaves and shoot tips.

In terms of biological role, hydrolyzes cytokinin glucosides thus liberating free cytokinins. In Nicotiana tabacum (Common tobacco), this protein is Cytokinin-beta-glucosidase (TROLC).